We begin with the raw amino-acid sequence, 51 residues long: MARYRCRRSQSRSRCCRQRRRCRRRRRQRFRARKRAMRCCHRRYRLRCRRY.

It belongs to the protamine P1 family. In terms of tissue distribution, testis.

Its subcellular location is the nucleus. It is found in the chromosome. Protamines substitute for histones in the chromatin of sperm during the haploid phase of spermatogenesis. They compact sperm DNA into a highly condensed, stable and inactive complex. The protein is Sperm protamine P1 (PRM1) of Colobus guereza (Mantled guereza).